A 54-amino-acid polypeptide reads, in one-letter code: Large ribosomal subunit protein bL33A (54 aa).

It belongs to the bacterial ribosomal protein bL33 family.

This chain is Large ribosomal subunit protein bL33A, found in Mycolicibacterium paratuberculosis (strain ATCC BAA-968 / K-10) (Mycobacterium paratuberculosis).